A 91-amino-acid polypeptide reads, in one-letter code: RNA-binding protein Hfq (91 aa).

Residues 9-69 (DRFLNMLRTG…ISTIMPSSFV (61 aa)) form the Sm domain.

It belongs to the Hfq family. In terms of assembly, homohexamer.

Its function is as follows. RNA chaperone that binds small regulatory RNA (sRNAs) and mRNAs to facilitate mRNA translational regulation in response to envelope stress, environmental stress and changes in metabolite concentrations. Also binds with high specificity to tRNAs. In Pseudothermotoga lettingae (strain ATCC BAA-301 / DSM 14385 / NBRC 107922 / TMO) (Thermotoga lettingae), this protein is RNA-binding protein Hfq.